The chain runs to 157 residues: Putative pre-16S rRNA nuclease (157 aa).

Belongs to the YqgF nuclease family.

The protein localises to the cytoplasm. In terms of biological role, could be a nuclease involved in processing of the 5'-end of pre-16S rRNA. This Orientia tsutsugamushi (strain Ikeda) (Rickettsia tsutsugamushi) protein is Putative pre-16S rRNA nuclease.